Consider the following 244-residue polypeptide: ATP synthase subunit a (244 aa).

The next 6 membrane-spanning stretches (helical) occupy residues 17 to 37, 75 to 95, 112 to 132, 164 to 184, 196 to 216, and 217 to 237; these read LTNI…AILT, FLAL…LGLP, DPAI…YYGV, LTLG…LGLL, FFLG…WQAF, and SLFI…VYMS.

This sequence belongs to the ATPase A chain family. F-type ATPases have 2 components, CF(1) - the catalytic core - and CF(0) - the membrane proton channel. CF(1) has five subunits: alpha(3), beta(3), gamma(1), delta(1), epsilon(1). CF(0) has three main subunits: a(1), b(2) and c(9-12). The alpha and beta chains form an alternating ring which encloses part of the gamma chain. CF(1) is attached to CF(0) by a central stalk formed by the gamma and epsilon chains, while a peripheral stalk is formed by the delta and b chains.

It is found in the cell membrane. In terms of biological role, key component of the proton channel; it plays a direct role in the translocation of protons across the membrane. This is ATP synthase subunit a from Bacillus velezensis (strain DSM 23117 / BGSC 10A6 / LMG 26770 / FZB42) (Bacillus amyloliquefaciens subsp. plantarum).